Consider the following 133-residue polypeptide: Profilin Sal k 4.0301 (133 aa).

A disulfide bridge connects residues Cys-95 and Cys-117.

Belongs to the profilin family. As to quaternary structure, occurs in many kinds of cells as a complex with monomeric actin in a 1:1 ratio. In terms of tissue distribution, expressed in pollen (at protein and mRNA level).

It localises to the cytoplasm. It is found in the cytoskeleton. Binds to actin and affects the structure of the cytoskeleton. At high concentrations, profilin prevents the polymerization of actin, whereas it enhances it at low concentrations. In Kali turgidum (Prickly saltwort), this protein is Profilin Sal k 4.0301.